The primary structure comprises 223 residues: MVSFTTLLAGFVAVTGVLSAPTETVEVVDVEKRQTIGPGTGFNNGYYYSYWNDGHSGVTYTNGAGGSFSVNWANSGNFVGGKGWNPGSSSRVINFSGSYNPNGNSYLSVYGWSKNPLIEYYIVENFGTYNPSTGTTKLGEVTSDGSVYDIYRTQRVNQPSIIGTATFYQYWSVRRNHAPAARSRLRTTSNAWRNLGLTLGTLDYQIIAVEGYFSSGNANINVS.

The signal sequence occupies residues 1–19 (MVSFTTLLAGFVAVTGVLS). One can recognise a GH11 domain in the interval 34–223 (QTIGPGTGFN…SSGNANINVS (190 aa)). A glycan (N-linked (GlcNAc...) asparagine) is linked at asparagine 94. Glutamate 119 functions as the Nucleophile in the catalytic mechanism. Catalysis depends on glutamate 210, which acts as the Proton donor.

This sequence belongs to the glycosyl hydrolase 11 (cellulase G) family. Interactc with tomato LeEix2 receptor to trigger its internalization.

It is found in the secreted. It carries out the reaction Endohydrolysis of (1-&gt;4)-beta-D-xylosidic linkages in xylans.. It functions in the pathway glycan degradation; xylan degradation. Its function is as follows. Endo-1,4-beta-xylanase involved in the hydrolysis of xylan, a major structural heterogeneous polysaccharide found in plant biomass representing the second most abundant polysaccharide in the biosphere, after cellulose. Acts as an elicitor of plant defense responses in hosts such as tobacco (Nicotiana tabacum) or tomato (Solanum lycopersicum). Induces the production of ethylene and leads alterations in membrane function with rapid efflux of potassium, uptake of calcium, alkalization of the medium, increased leakage of cellular components and necrosis in plant hosts. EIX is translocated through the xylem of the host plant to the leaf mesophyll, leading to host response to pathogen-derived extracellular proteins in tissues distant from the invading pathogen. Greatly enhances the expression of two calcineurin B-like proteins-interacting protein kinases (CIPKs) family members, OsCIPK14 and OsCIPK15, in rice cultured cells. In tomato, triggers the defense response via binding to and subsequent internalization of the LeEix2 receptor. The sequence is that of Ethylene-inducing xylanase from Hypocrea rufa (Trichoderma viride).